Consider the following 403-residue polypeptide: Probable eukaryotic initiation factor 4A (403 aa).

Residues 1 to 29 form a disordered region; it reads MAQNDKIAPQDQDSFLDDQPGVRPIPSFD. A Q motif motif is present at residues 26-54; sequence PSFDDMPLHQNLLRGIYSYGFEKPSSIQQ. The region spanning 57–230 is the Helicase ATP-binding domain; the sequence is IAPFTRGGDI…KKFMRDPVRI (174 aa). 70–77 serves as a coordination point for ATP; that stretch reads AQSGTGKT. Positions 178–181 match the DEAD box motif; it reads DEAD. The 161-residue stretch at 241 to 401 folds into the Helicase C-terminal domain; that stretch reads GIKQFFIAVE…ELPVDFAAYL (161 aa).

It belongs to the DEAD box helicase family. eIF4A subfamily. In terms of assembly, eIF4F is a multi-subunit complex, the composition of which varies with external and internal environmental conditions. It is composed of at least EIF4A, EIF4E and EIF4G.

It catalyses the reaction ATP + H2O = ADP + phosphate + H(+). Functionally, ATP-dependent RNA helicase which is a subunit of the eIF4F complex involved in cap recognition and is required for mRNA binding to ribosome. In the current model of translation initiation, eIF4A unwinds RNA secondary structures in the 5'-UTR of mRNAs which is necessary to allow efficient binding of the small ribosomal subunit, and subsequent scanning for the initiator codon. This chain is Probable eukaryotic initiation factor 4A, found in Leishmania infantum.